A 334-amino-acid polypeptide reads, in one-letter code: Cytoskeleton protein RodZ (334 aa).

At 1 to 111 the chain is on the cytoplasmic side; the sequence is MNTEATHDQN…LGKRRKKRDG (111 aa). Positions 19 to 71 constitute an HTH cro/C1-type domain; it reads LRNAREQLGLSQQAVAERLCLKVSTVRDIEEDKAPSDLASTFLRGYIRSYARL. The segment at residues 30–49 is a DNA-binding region (H-T-H motif); sequence QQAVAERLCLKVSTVRDIEE. A helical; Signal-anchor for type II membrane protein transmembrane segment spans residues 112-132; it reads WLMSFTWLVLFVVVGLTGAWW. At 133 to 334 the chain is on the periplasmic side; sequence WQNHKAQQEE…TLNAEPTPAQ (202 aa). The segment at 154-241 is disordered; sequence LNADKDSGQS…PSALPTSQAG (88 aa). 2 stretches are compositionally biased toward low complexity: residues 176–211 and 219–241; these read TTPA…TVVA and TAAT…SQAG.

This sequence belongs to the RodZ family.

Its subcellular location is the cell inner membrane. Cytoskeletal protein that is involved in cell-shape control through regulation of the length of the long axis. This Salmonella choleraesuis (strain SC-B67) protein is Cytoskeleton protein RodZ.